A 614-amino-acid chain; its full sequence is Sodium- and chloride-dependent betaine transporter (614 aa).

Residues 1–33 are disordered; the sequence is MDRKVAVPEDGPPVVSWLPEEGEKLDQEGEDQV. Topologically, residues 1 to 44 are cytoplasmic; sequence MDRKVAVPEDGPPVVSWLPEEGEKLDQEGEDQVKDRGQWTNKME. The span at 21–33 shows a compositional bias: basic and acidic residues; sequence EGEKLDQEGEDQV. The next 3 helical transmembrane spans lie at 45 to 65, 73 to 92, and 117 to 137; these read FVLS…FPYL, AFFI…VFFL, and GIGL…IIIL. Topologically, residues 138 to 210 are extracellular; sequence AWALFYLFSS…SGIHDLGALR (73 aa). Cysteine 157 and cysteine 166 are disulfide-bonded. Asparagine 171 and asparagine 183 each carry an N-linked (GlcNAc...) asparagine glycan. A run of 9 helical transmembrane segments spans residues 211-229, 238-255, 291-308, 320-341, 374-393, 423-441, 458-478, 499-518, and 538-556; these read WELA…FCIW, VVYF…ILLI, IFFS…LGSY, IALC…FSIL, MPLS…FLGL, LLIL…FLVT, GICL…VYGA, ISWL…FSLS, and IGWF…FVII. At 557–614 the chain is on the cytoplasmic side; it reads TLLKTRGSFKKRLRQLTTPDPSLPQPKQHLYLDGGTSQDCGPSPTKEGLIVGEKETHL. Positions 591 to 614 are disordered; sequence GTSQDCGPSPTKEGLIVGEKETHL.

Belongs to the sodium:neurotransmitter symporter (SNF) (TC 2.A.22) family. SLC6A12 subfamily. Interacts with LIN7C. In terms of tissue distribution, kidney.

The protein localises to the basolateral cell membrane. It is found in the cell membrane. The catalysed reaction is 4-aminobutanoate(out) + chloride(out) + 3 Na(+)(out) = 4-aminobutanoate(in) + chloride(in) + 3 Na(+)(in). The enzyme catalyses glycine betaine(out) + 2 chloride(out) + 3 Na(+)(out) = glycine betaine(in) + 2 chloride(in) + 3 Na(+)(in). In terms of biological role, transporter that mediates cellular uptake of betaine and GABA in a sodium- and chloride-dependent process. May have a role in regulation of GABAergic transmission in the brain through the reuptake of GABA into presynaptic terminals, as well as in osmotic regulation. Probably also involved in renal and hepatic osmotic regulation. This chain is Sodium- and chloride-dependent betaine transporter (SLC6A12), found in Canis lupus familiaris (Dog).